We begin with the raw amino-acid sequence, 449 residues long: Tubulin alpha chain (449 aa).

8 residues coordinate GTP: Gln-11, Glu-71, Ser-140, Gly-144, Thr-145, Thr-179, Asn-206, and Asn-228. Mg(2+) is bound at residue Glu-71. Residue Glu-254 is part of the active site.

Belongs to the tubulin family. Dimer of alpha and beta chains. A typical microtubule is a hollow water-filled tube with an outer diameter of 25 nm and an inner diameter of 15 nM. Alpha-beta heterodimers associate head-to-tail to form protofilaments running lengthwise along the microtubule wall with the beta-tubulin subunit facing the microtubule plus end conferring a structural polarity. Microtubules usually have 13 protofilaments but different protofilament numbers can be found in some organisms and specialized cells. It depends on Mg(2+) as a cofactor.

The protein localises to the cytoplasm. It is found in the cytoskeleton. The enzyme catalyses GTP + H2O = GDP + phosphate + H(+). Its function is as follows. Tubulin is the major constituent of microtubules, a cylinder consisting of laterally associated linear protofilaments composed of alpha- and beta-tubulin heterodimers. Microtubules grow by the addition of GTP-tubulin dimers to the microtubule end, where a stabilizing cap forms. Below the cap, tubulin dimers are in GDP-bound state, owing to GTPase activity of alpha-tubulin. The chain is Tubulin alpha chain (TUB1) from Pneumocystis carinii.